We begin with the raw amino-acid sequence, 252 residues long: Aquaporin TIP4-4 (252 aa).

Helical transmembrane passes span 20–40 (AVLA…GSAM) and 53–73 (VVGL…MVSA). The NPA 1 signature appears at 83–85 (NPA). Transmembrane regions (helical) follow at residues 105–125 (VAAQ…LAVA), 143–163 (GVLM…ATVV), and 168–188 (AVGG…VLAG). Residues 197 to 199 (NPA) carry the NPA 2 motif. Residues 216–236 (VYWVGPLIGGPLAGLVYDGLF) traverse the membrane as a helical segment.

The protein belongs to the MIP/aquaporin (TC 1.A.8) family. TIP (TC 1.A.8.10) subfamily.

The protein localises to the vacuole membrane. Aquaporins facilitate the transport of water and small neutral solutes across cell membranes. This Zea mays (Maize) protein is Aquaporin TIP4-4 (TIP4-4).